The chain runs to 177 residues: Bifunctional protein PyrR (177 aa).

A PRPP-binding motif is present at residues L99–T111.

Belongs to the purine/pyrimidine phosphoribosyltransferase family. PyrR subfamily.

The enzyme catalyses UMP + diphosphate = 5-phospho-alpha-D-ribose 1-diphosphate + uracil. In terms of biological role, regulates the transcription of the pyrimidine nucleotide (pyr) operon in response to exogenous pyrimidines. Also displays a weak uracil phosphoribosyltransferase activity which is not physiologically significant. This Picosynechococcus sp. (strain ATCC 27264 / PCC 7002 / PR-6) (Agmenellum quadruplicatum) protein is Bifunctional protein PyrR.